Here is a 335-residue protein sequence, read N- to C-terminus: Protein PXR1 (335 aa).

A G-patch domain is found at 25-71; the sequence is KSRFGHKYLEKLGWEPGKGLGHASHAMSTHIKVTIKDDTMGLGAKLK. The interval 155–310 is disordered; the sequence is DDAEDAKVSG…PPTISTRLSV (156 aa). Positions 163-175 are enriched in basic residues; that stretch reads SGKHRDRKSRAKR. Residues 183–209 are compositionally biased toward basic and acidic residues; it reads LKEKCRDIDRTRKSKRKEKEQEKEKNR. Basic residues predominate over residues 226–257; it reads KKDKKDKKEKKEKKEKKEKKEKKHKEKSNKRL.

It belongs to the PINX1 family.

Its subcellular location is the nucleus. The protein resides in the nucleolus. Functionally, involved in rRNA-processing at A0, A1 and A2 sites and negatively regulates telomerase. In Eremothecium gossypii (strain ATCC 10895 / CBS 109.51 / FGSC 9923 / NRRL Y-1056) (Yeast), this protein is Protein PXR1 (PXR1).